Here is a 417-residue protein sequence, read N- to C-terminus: Serine hydroxymethyltransferase (417 aa).

(6S)-5,6,7,8-tetrahydrofolate is bound by residues Leu-121 and 125-127 (GHL). Position 229 is an N6-(pyridoxal phosphate)lysine (Lys-229). 355-357 (SPF) lines the (6S)-5,6,7,8-tetrahydrofolate pocket.

It belongs to the SHMT family. As to quaternary structure, homodimer. The cofactor is pyridoxal 5'-phosphate.

The protein resides in the cytoplasm. It carries out the reaction (6R)-5,10-methylene-5,6,7,8-tetrahydrofolate + glycine + H2O = (6S)-5,6,7,8-tetrahydrofolate + L-serine. The protein operates within one-carbon metabolism; tetrahydrofolate interconversion. It functions in the pathway amino-acid biosynthesis; glycine biosynthesis; glycine from L-serine: step 1/1. Catalyzes the reversible interconversion of serine and glycine with tetrahydrofolate (THF) serving as the one-carbon carrier. This reaction serves as the major source of one-carbon groups required for the biosynthesis of purines, thymidylate, methionine, and other important biomolecules. Also exhibits THF-independent aldolase activity toward beta-hydroxyamino acids, producing glycine and aldehydes, via a retro-aldol mechanism. The chain is Serine hydroxymethyltransferase from Salmonella paratyphi C (strain RKS4594).